Reading from the N-terminus, the 144-residue chain is Large ribosomal subunit protein uL15 (144 aa).

The interval 1-49 (MRLNTLSPAAGAKSAAKRVGRGIGSGTGKTCGRGHKGQKSRSGGGVRVG) is disordered. A compositionally biased stretch (gly residues) spans 21–31 (RGIGSGTGKTC).

Belongs to the universal ribosomal protein uL15 family. Part of the 50S ribosomal subunit.

Binds to the 23S rRNA. The protein is Large ribosomal subunit protein uL15 of Shewanella halifaxensis (strain HAW-EB4).